Reading from the N-terminus, the 523-residue chain is Cilia- and flagella-associated protein 157 (523 aa).

Residues 1-31 are disordered; that stretch reads MAPKKKPNKGGKEMQGKKIGGKKDASGTKTP. Residues 10–26 show a composition bias toward basic and acidic residues; it reads GGKEMQGKKIGGKKDAS. Residue Thr-30 is modified to Phosphothreonine. Coiled coils occupy residues 32–191, 248–274, and 302–371; these read ELAM…LEKK, VQLL…LENT, and GTEE…VLIQ. Positions 419–440 are disordered; it reads QPDMGSHQDKQPQGLSKESQRI. Residues 429 to 440 show a composition bias toward polar residues; that stretch reads QPQGLSKESQRI.

The protein belongs to the CFAP157 family. As to quaternary structure, interacts with TUBB and TUBA4A. Interacts with CEP350. Specifically expressed in tissues containing motile cilia.

Its subcellular location is the cytoplasm. The protein resides in the cytoskeleton. It is found in the cilium basal body. In terms of biological role, specifically required during spermatogenesis for flagellum morphogenesis and sperm motility. May be required to suppress the formation of supernumerary axonemes and ensure a correct ultrastructure. The protein is Cilia- and flagella-associated protein 157 of Mus musculus (Mouse).